A 375-amino-acid polypeptide reads, in one-letter code: Dual-specificity RNA methyltransferase RlmN (375 aa).

Residue E94 is the Proton acceptor of the active site. The 240-residue stretch at 100-339 folds into the Radical SAM core domain; sequence EEDRATLCVS…VTVRKTRGDD (240 aa). Residues C107 and C344 are joined by a disulfide bond. The [4Fe-4S] cluster site is built by C114, C118, and C121. S-adenosyl-L-methionine-binding positions include 168-169, S200, 222-224, and N301; these read GE and SLH. The active-site S-methylcysteine intermediate is the C344.

This sequence belongs to the radical SAM superfamily. RlmN family. The cofactor is [4Fe-4S] cluster.

Its subcellular location is the cytoplasm. The catalysed reaction is adenosine(2503) in 23S rRNA + 2 reduced [2Fe-2S]-[ferredoxin] + 2 S-adenosyl-L-methionine = 2-methyladenosine(2503) in 23S rRNA + 5'-deoxyadenosine + L-methionine + 2 oxidized [2Fe-2S]-[ferredoxin] + S-adenosyl-L-homocysteine. It carries out the reaction adenosine(37) in tRNA + 2 reduced [2Fe-2S]-[ferredoxin] + 2 S-adenosyl-L-methionine = 2-methyladenosine(37) in tRNA + 5'-deoxyadenosine + L-methionine + 2 oxidized [2Fe-2S]-[ferredoxin] + S-adenosyl-L-homocysteine. Functionally, specifically methylates position 2 of adenine 2503 in 23S rRNA and position 2 of adenine 37 in tRNAs. m2A2503 modification seems to play a crucial role in the proofreading step occurring at the peptidyl transferase center and thus would serve to optimize ribosomal fidelity. The chain is Dual-specificity RNA methyltransferase RlmN from Vibrio parahaemolyticus serotype O3:K6 (strain RIMD 2210633).